A 494-amino-acid polypeptide reads, in one-letter code: tRNA (guanine(37)-N(1))-methyltransferase (494 aa).

Residues 1 to 32 (MRIRRILYFYGNLPNTYTANVLRRLAFSCWHT) constitute a mitochondrion transit peptide. S-adenosyl-L-methionine contacts are provided by residues His-278, 316–317 (DL), 344–345 (DG), and Asn-377. The segment at 468–494 (DTGEPESKRPRTAEAFPLPHVQQSRNS) is disordered.

This sequence belongs to the class I-like SAM-binding methyltransferase superfamily. TRM5/TYW2 family. In terms of assembly, monomer.

It localises to the mitochondrion matrix. It is found in the nucleus. Its subcellular location is the cytoplasm. The catalysed reaction is guanosine(37) in tRNA + S-adenosyl-L-methionine = N(1)-methylguanosine(37) in tRNA + S-adenosyl-L-homocysteine + H(+). Its function is as follows. Involved in mitochondrial tRNA methylation. Specifically methylates the N1 position of guanosine-37 in various tRNAs. Methylation is not dependent on the nature of the nucleoside 5' of the target nucleoside. This is the first step in the biosynthesis of wybutosine (yW), a modified base adjacent to the anticodon of tRNAs and required for accurate decoding. This chain is tRNA (guanine(37)-N(1))-methyltransferase (trmt5), found in Xenopus tropicalis (Western clawed frog).